We begin with the raw amino-acid sequence, 352 residues long: Peptide chain release factor 1 (352 aa).

Glutamine 233 is modified (N5-methylglutamine). Residues 288-309 (NAKDRKEQVGSGDRSERIRTYN) are disordered. The span at 289 to 306 (AKDRKEQVGSGDRSERIR) shows a compositional bias: basic and acidic residues.

This sequence belongs to the prokaryotic/mitochondrial release factor family. In terms of processing, methylated by PrmC. Methylation increases the termination efficiency of RF1.

It is found in the cytoplasm. Functionally, peptide chain release factor 1 directs the termination of translation in response to the peptide chain termination codons UAG and UAA. This chain is Peptide chain release factor 1 (prfA), found in Helicobacter pylori (strain J99 / ATCC 700824) (Campylobacter pylori J99).